We begin with the raw amino-acid sequence, 154 residues long: uncharacterized protein (154 aa).

A HotDog ACOT-type domain is found at 13-128 (SKGVLLLRTL…VFTFVAVDNN (116 aa)).

This sequence belongs to the acyl coenzyme A hydrolase family.

This is an uncharacterized protein from Haemophilus influenzae (strain ATCC 51907 / DSM 11121 / KW20 / Rd).